We begin with the raw amino-acid sequence, 157 residues long: Multidrug resistance efflux pump SepA (157 aa).

4 helical membrane-spanning segments follow: residues 18–38, 63–83, 100–120, and 122–142; these read IVLF…GFGL, LLYY…VEHL, ATFH…IIHL, and YVYI…LYVC.

Belongs to the multidrug resistance efflux pump SepA family.

It is found in the cell membrane. Its function is as follows. Involved in multidrug efflux. This is Multidrug resistance efflux pump SepA (sepA) from Staphylococcus aureus (strain bovine RF122 / ET3-1).